The primary structure comprises 115 residues: Phosphoribosyl-AMP cyclohydrolase (115 aa).

Asp-80 serves as a coordination point for Mg(2+). Position 81 (Cys-81) interacts with Zn(2+). Mg(2+) contacts are provided by Asp-82 and Asp-84. Cys-97 and Cys-104 together coordinate Zn(2+).

It belongs to the PRA-CH family. As to quaternary structure, homodimer. Mg(2+) serves as cofactor. Requires Zn(2+) as cofactor.

Its subcellular location is the cytoplasm. The catalysed reaction is 1-(5-phospho-beta-D-ribosyl)-5'-AMP + H2O = 1-(5-phospho-beta-D-ribosyl)-5-[(5-phospho-beta-D-ribosylamino)methylideneamino]imidazole-4-carboxamide. It participates in amino-acid biosynthesis; L-histidine biosynthesis; L-histidine from 5-phospho-alpha-D-ribose 1-diphosphate: step 3/9. Its function is as follows. Catalyzes the hydrolysis of the adenine ring of phosphoribosyl-AMP. This Mycolicibacterium paratuberculosis (strain ATCC BAA-968 / K-10) (Mycobacterium paratuberculosis) protein is Phosphoribosyl-AMP cyclohydrolase.